Here is a 237-residue protein sequence, read N- to C-terminus: Ribosomal RNA small subunit methyltransferase G (237 aa).

S-adenosyl-L-methionine is bound by residues Gly-76, Phe-81, 128-129 (VE), and Arg-147.

Belongs to the methyltransferase superfamily. RNA methyltransferase RsmG family.

It is found in the cytoplasm. Specifically methylates the N7 position of a guanine in 16S rRNA. In Prochlorococcus marinus (strain MIT 9215), this protein is Ribosomal RNA small subunit methyltransferase G.